Consider the following 382-residue polypeptide: 3-phytase (382 aa).

Positions 1-26 are cleaved as a signal peptide; that stretch reads MKVPKTMLLSTAAGLLLSLTATSVSA. Residues 27–361 form the BPP domain; the sequence is HYVNEEHHFK…VSWEQIAQHL (335 aa).

It localises to the secreted. The catalysed reaction is 1D-myo-inositol hexakisphosphate + H2O = 1D-myo-inositol 1,2,4,5,6-pentakisphosphate + phosphate. The sequence is that of 3-phytase (phy) from Bacillus subtilis (strain 168).